Reading from the N-terminus, the 140-residue chain is 3-hydroxyacyl-[acyl-carrier-protein] dehydratase FabZ (140 aa).

Residue histidine 48 is part of the active site.

This sequence belongs to the thioester dehydratase family. FabZ subfamily.

The protein localises to the cytoplasm. It carries out the reaction a (3R)-hydroxyacyl-[ACP] = a (2E)-enoyl-[ACP] + H2O. Its function is as follows. Involved in unsaturated fatty acids biosynthesis. Catalyzes the dehydration of short chain beta-hydroxyacyl-ACPs and long chain saturated and unsaturated beta-hydroxyacyl-ACPs. This chain is 3-hydroxyacyl-[acyl-carrier-protein] dehydratase FabZ, found in Ligilactobacillus salivarius (strain UCC118) (Lactobacillus salivarius).